Reading from the N-terminus, the 121-residue chain is UPF0102 protein DSY2577 (121 aa).

The protein belongs to the UPF0102 family.

This Desulfitobacterium hafniense (strain Y51) protein is UPF0102 protein DSY2577.